The sequence spans 275 residues: Methylglyoxal reductase DkgA (275 aa).

Catalysis depends on Tyr51, which acts as the Proton donor. His107 is a binding site for substrate. 187–241 serves as a coordination point for NADP(+); sequence SPLAQGGKGVFDQKVIRDLADKYGKTPAQIVIRWHLDSGLVVIPKSVTPSRIAEN.

Belongs to the aldo/keto reductase family. As to quaternary structure, monomer.

It localises to the cytoplasm. It carries out the reaction hydroxyacetone + NADP(+) = methylglyoxal + NADPH + H(+). The enzyme catalyses a primary alcohol + NADP(+) = an aldehyde + NADPH + H(+). The catalysed reaction is 2-dehydro-L-idonate + NADP(+) = 2,5-didehydro-D-gluconate + NADPH + H(+). Aldo-keto reductase that significantly contributes to cellular methylglyoxal detoxification by catalyzing the NADPH-dependent conversion of methylglyoxal to acetol. It also exhibits fairly high activity with glyoxal. Shows broad specificity and can use aromatic aldehydes such as 4-nitrobenzaldehyde, 3-nitrobenzaldehyde and benzaldehyde, and phenylglyoxal. Shows beta-keto ester reductase activity toward ethyl acetoacetate and a variety of 2-substituted derivatives. Also catalyzes the reduction of 2,5-diketo-D-gluconic acid (25DKG) to 2-keto-L-gulonic acid (2KLG) and could be involved in ketogluconate metabolism. However, the specific activity of the enzyme toward 2,5-diketo-D-gluconate was reported to be almost 400-fold lower than its activity toward methylglyoxal. Can catalyze in vitro the NADPH-dependent reduction of furfural, a natural product of lignocellulosic decomposition, to the less toxic product, furfuryl alcohol. However, it is unlikely that furfural is a physiological substrate. This chain is Methylglyoxal reductase DkgA, found in Escherichia coli (strain K12).